The primary structure comprises 997 residues: Glutamate [NMDA] receptor subunit 1 (997 aa).

Positions 1-26 are cleaved as a signal peptide; the sequence is MAVAGFVFCRPLFGLAIVLLVAPIDA. The Extracellular portion of the chain corresponds to 27–573; the sequence is AQRHTASDNP…TLVSFLQPFS (547 aa). N-linked (GlcNAc...) asparagine glycans are attached at residues asparagine 258, asparagine 314, asparagine 345, asparagine 397, asparagine 454, asparagine 481, and asparagine 501. Residues 530 to 532 and arginine 537 each bind glycine; that span reads PLT. The chain crosses the membrane as a helical span at residues 574 to 594; the sequence is NTLWILVMVSVHVVALVLYLL. The Cytoplasmic segment spans residues 595–651; it reads DRFSPFGRFKLSHSDSNEEKALNLSSAVWFAWGVLLNSGIGEGTPRSFSARVLGMVW. A helical membrane pass occupies residues 652–672; the sequence is AGFAMIIVASYTANLAAFLVL. Residues 673–831 lie on the Extracellular side of the membrane; the sequence is ERPKTKLSGI…KTPNTLGLKN (159 aa). Asparagine 693 carries an N-linked (GlcNAc...) asparagine glycan. Glycine contacts are provided by serine 703 and aspartate 747. Residues 832-852 traverse the membrane as a helical segment; sequence MAGVFILVGVGIAGGVGLIII. Residues 853–997 lie on the Cytoplasmic side of the membrane; the sequence is EVIYKKHQVK…YTSDVSHLVV (145 aa). The segment at 970–997 is disordered; sequence LGKTRPQQSVLPPRYSPGYTSDVSHLVV. The span at 987 to 997 shows a compositional bias: polar residues; that stretch reads GYTSDVSHLVV.

This sequence belongs to the glutamate-gated ion channel (TC 1.A.10.1) family. As to quaternary structure, forms a heteromeric NMDA channel with Nmdar2.

It is found in the cell membrane. Its subcellular location is the postsynaptic cell membrane. The protein localises to the postsynaptic density. Functionally, NMDA receptor subtype of glutamate-gated ion channels with high calcium permeability and voltage-dependent sensitivity to magnesium. Mediated by glycine. This protein plays a key role in synaptic plasticity, synaptogenesis, excitotoxicity, memory acquisition and learning. It mediates neuronal functions in glutamate neurotransmission. Is involved in the cell surface targeting of NMDA receptors. Plays a role in associative learning and in long-term memory consolidation. The chain is Glutamate [NMDA] receptor subunit 1 from Drosophila sechellia (Fruit fly).